A 1030-amino-acid polypeptide reads, in one-letter code: Teashirt homolog 2 (1030 aa).

The interval 1–120 (MPRRKQQAPK…THPKLPSEPH (120 aa)) is disordered. Positions 11-42 (RAAGYAQEEVLKEEEEIKEEEEEEEDSGSVAQ) form a coiled coil. Residues 21 to 37 (LKEEEEIKEEEEEEEDS) show a composition bias toward acidic residues. Polar residues-rich tracts occupy residues 39 to 49 (SVAQHQSSNDT) and 66 to 95 (SCQNSPGSHLSNQDAENESLLSDASDQVSD). Positions 103 to 120 (DVSDKKANTHPKLPSEPH) are enriched in basic and acidic residues. Lys189 participates in a covalent cross-link: Glycyl lysine isopeptide (Lys-Gly) (interchain with G-Cter in SUMO2). C2H2-type zinc fingers lie at residues 216 to 240 (FRCRQCSAAYDTLVELTVHMNETGH) and 276 to 300 (LKCMFCGDSFDSLQDLSVHMIKTKH). A disordered region spans residues 240–266 (HYQDDNRKKDKLRPTSYSKPRKRAFQD). Residues Lys307 and Lys316 each participate in a glycyl lysine isopeptide (Lys-Gly) (interchain with G-Cter in SUMO2) cross-link. The tract at residues 328 to 348 (VNRPCSPDSTTGSLADSFSSQ) is disordered. The segment covering 334–348 (PDSTTGSLADSFSSQ) has biased composition (polar residues). The segment at 381-405 (LKCMECGSSHDTLQQLTTHMMVTGH) adopts a C2H2-type 3; atypical zinc-finger fold. A Glycyl lysine isopeptide (Lys-Gly) (interchain with G-Cter in SUMO2) cross-link involves residue Lys418. Residues 432-459 (SLSETPNSESLAPKPSSNSPSECTASTT) are compositionally biased toward polar residues. The disordered stretch occupies residues 432-488 (SLSETPNSESLAPKPSSNSPSECTASTTELKKESKKEKGEGIEDEQGVKSEDYEDSL). The segment covering 460–482 (ELKKESKKEKGEGIEDEQGVKSE) has biased composition (basic and acidic residues). Residues Lys462, Lys480, Lys497, and Lys601 each participate in a glycyl lysine isopeptide (Lys-Gly) (interchain with G-Cter in SUMO2) cross-link. Basic and acidic residues-rich tracts occupy residues 608 to 623 (DEVVKQCGKESPHEEA) and 633 to 664 (SFSKIEPPSESRKAEPCPLKEEEKPQKEKPEP). Disordered stretches follow at residues 608–687 (DEVV…LPSI), 703–726 (KATEPLRSPSCSSPNSSTSPVFHK), and 759–784 (QPIDLTKSKSKRAESSQAQSCTSPPQ). A Glycyl lysine isopeptide (Lys-Gly) (interchain with G-Cter in SUMO2) cross-link involves residue Lys652. A compositionally biased stretch (low complexity) spans 710-722 (SPSCSSPNSSTSP). The segment covering 773-783 (SSQAQSCTSPP) has biased composition (polar residues). Residues Lys796 and Lys816 each participate in a glycyl lysine isopeptide (Lys-Gly) (interchain with G-Cter in SUMO2) cross-link. The segment at residues 837-907 (RKGRQSNWNP…NVKYQLRKTG (71 aa)) is a DNA-binding region (homeobox). The segment at 922 to 944 (FYCSDCASQFRTPSTYISHLESH) adopts a C2H2-type 4 zinc-finger fold. Lys962 is covalently cross-linked (Glycyl lysine isopeptide (Lys-Gly) (interchain with G-Cter in SUMO2)). Disordered stretches follow at residues 965–987 (QEISRVSSAQRSPETIAGEEDTD) and 1009–1030 (LSKTHSKSPEHHSQFVADVDEE). Polar residues predominate over residues 968 to 977 (SRVSSAQRSP). Ser976 is subject to Phosphoserine. A C2H2-type 5 zinc finger spans residues 990–1013 (FKCKLCRRTFVSKHAVKLHLSKTH).

Belongs to the teashirt C2H2-type zinc-finger protein family. In terms of assembly, interacts (via homeobox domain) with APBB1 (via PID domain 1). Sumoylated.

Its subcellular location is the nucleus. Its function is as follows. Probable transcriptional regulator involved in developmental processes. May act as a transcriptional repressor (Potential). The protein is Teashirt homolog 2 (Tshz2) of Mus musculus (Mouse).